Consider the following 699-residue polypeptide: Elongation factor G (699 aa).

One can recognise a tr-type G domain in the interval 8 to 286 (EKLRNIGIVA…AVIVTYPLPI (279 aa)). GTP-binding positions include 17 to 24 (AHIDAGKT), 84 to 88 (DTPGH), and 138 to 141 (NKMD).

This sequence belongs to the TRAFAC class translation factor GTPase superfamily. Classic translation factor GTPase family. EF-G/EF-2 subfamily.

It localises to the cytoplasm. Functionally, catalyzes the GTP-dependent ribosomal translocation step during translation elongation. During this step, the ribosome changes from the pre-translocational (PRE) to the post-translocational (POST) state as the newly formed A-site-bound peptidyl-tRNA and P-site-bound deacylated tRNA move to the P and E sites, respectively. Catalyzes the coordinated movement of the two tRNA molecules, the mRNA and conformational changes in the ribosome. The chain is Elongation factor G (fusA) from Aquifex pyrophilus.